The primary structure comprises 85 residues: Large ribosomal subunit protein bL27 (85 aa).

The disordered stretch occupies residues 1–20; the sequence is MAHKKAGGSTRNGRDSEAKR.

Belongs to the bacterial ribosomal protein bL27 family.

The protein is Large ribosomal subunit protein bL27 of Proteus mirabilis (strain HI4320).